A 119-amino-acid chain; its full sequence is Ribosome-binding factor A (119 aa).

The protein belongs to the RbfA family. As to quaternary structure, monomer. Binds 30S ribosomal subunits, but not 50S ribosomal subunits or 70S ribosomes.

The protein localises to the cytoplasm. Functionally, one of several proteins that assist in the late maturation steps of the functional core of the 30S ribosomal subunit. Associates with free 30S ribosomal subunits (but not with 30S subunits that are part of 70S ribosomes or polysomes). Required for efficient processing of 16S rRNA. May interact with the 5'-terminal helix region of 16S rRNA. The chain is Ribosome-binding factor A from Mycoplasmoides gallisepticum (strain R(low / passage 15 / clone 2)) (Mycoplasma gallisepticum).